The following is a 334-amino-acid chain: Beta-ketoacyl-[acyl-carrier-protein] synthase III (334 aa).

Active-site residues include Cys116 and His256. The interval 257–261 (QANLR) is ACP-binding. Asn286 is an active-site residue.

It belongs to the thiolase-like superfamily. FabH family. In terms of assembly, homodimer.

It is found in the cytoplasm. It carries out the reaction malonyl-[ACP] + acetyl-CoA + H(+) = 3-oxobutanoyl-[ACP] + CO2 + CoA. It functions in the pathway lipid metabolism; fatty acid biosynthesis. Its function is as follows. Catalyzes the condensation reaction of fatty acid synthesis by the addition to an acyl acceptor of two carbons from malonyl-ACP. Catalyzes the first condensation reaction which initiates fatty acid synthesis and may therefore play a role in governing the total rate of fatty acid production. Possesses both acetoacetyl-ACP synthase and acetyl transacylase activities. Its substrate specificity determines the biosynthesis of branched-chain and/or straight-chain of fatty acids. In Phocaeicola vulgatus (strain ATCC 8482 / DSM 1447 / JCM 5826 / CCUG 4940 / NBRC 14291 / NCTC 11154) (Bacteroides vulgatus), this protein is Beta-ketoacyl-[acyl-carrier-protein] synthase III.